We begin with the raw amino-acid sequence, 113 residues long: uncharacterized protein (113 aa).

Residues 4–26 traverse the membrane as a helical segment; it reads VLFKIAVALLYLLSFFLHRLHLR. Positions 32 to 74 are disordered; the sequence is RRRRRRHHRRHHRRHHHHRRRRRRRRRRRRRHHRHHHHRHRRR.

The protein localises to the membrane. This is an uncharacterized protein from Saccharomyces cerevisiae (strain ATCC 204508 / S288c) (Baker's yeast).